The following is a 164-amino-acid chain: MTKKDKKPKVATITTKSGETLKVFEDLAQFEDFLKHETEDDDDFDNVHCQLKYYPPFVLHEAHDDPEKIKDTANSHSKKYVRHLHQHVEKHLLKEIKEALQLPDLKFKDKSKDEDFEKIVWNYGDTGEFHDRKFRISISVTCKHDDAMVDLDYKTVPLTEESVI.

Belongs to the RGI1 family.

It localises to the cell membrane. In terms of biological role, involved in the control of energetic metabolism and significantly contribute to cell fitness, especially under respiratory growth conditions. This Vanderwaltozyma polyspora (strain ATCC 22028 / DSM 70294 / BCRC 21397 / CBS 2163 / NBRC 10782 / NRRL Y-8283 / UCD 57-17) (Kluyveromyces polysporus) protein is Respiratory growth induced protein 1 (RGI1).